The chain runs to 202 residues: Ribosome maturation factor RimM (202 aa).

A PRC barrel domain is found at 121-202 (KDEYYWVDLI…CITVDWQPDY (82 aa)).

Belongs to the RimM family. As to quaternary structure, binds ribosomal protein uS19.

It is found in the cytoplasm. Its function is as follows. An accessory protein needed during the final step in the assembly of 30S ribosomal subunit, possibly for assembly of the head region. Essential for efficient processing of 16S rRNA. May be needed both before and after RbfA during the maturation of 16S rRNA. It has affinity for free ribosomal 30S subunits but not for 70S ribosomes. This is Ribosome maturation factor RimM from Polaromonas sp. (strain JS666 / ATCC BAA-500).